Consider the following 320-residue polypeptide: Malate dehydrogenase (320 aa).

NAD(+) is bound by residues 10–15 and D34; that span reads GSGMIG. The substrate site is built by R83 and R89. NAD(+) contacts are provided by residues N96 and 119-121; that span reads ITN. 2 residues coordinate substrate: N121 and R152. H176 functions as the Proton acceptor in the catalytic mechanism.

Belongs to the LDH/MDH superfamily. MDH type 3 family.

The catalysed reaction is (S)-malate + NAD(+) = oxaloacetate + NADH + H(+). Catalyzes the reversible oxidation of malate to oxaloacetate. This Brucella melitensis biotype 1 (strain ATCC 23456 / CCUG 17765 / NCTC 10094 / 16M) protein is Malate dehydrogenase.